A 185-amino-acid chain; its full sequence is Acireductone dioxygenase (185 aa).

Fe(2+) contacts are provided by H97, H99, E103, and H141. Positions 97, 99, 103, and 141 each coordinate Ni(2+).

This sequence belongs to the acireductone dioxygenase (ARD) family. Monomer. The cofactor is Fe(2+). Ni(2+) is required as a cofactor.

It catalyses the reaction 1,2-dihydroxy-5-(methylsulfanyl)pent-1-en-3-one + O2 = 3-(methylsulfanyl)propanoate + CO + formate + 2 H(+). It carries out the reaction 1,2-dihydroxy-5-(methylsulfanyl)pent-1-en-3-one + O2 = 4-methylsulfanyl-2-oxobutanoate + formate + 2 H(+). The protein operates within amino-acid biosynthesis; L-methionine biosynthesis via salvage pathway; L-methionine from S-methyl-5-thio-alpha-D-ribose 1-phosphate: step 5/6. Catalyzes 2 different reactions between oxygen and the acireductone 1,2-dihydroxy-3-keto-5-methylthiopentene (DHK-MTPene) depending upon the metal bound in the active site. Fe-containing acireductone dioxygenase (Fe-ARD) produces formate and 2-keto-4-methylthiobutyrate (KMTB), the alpha-ketoacid precursor of methionine in the methionine recycle pathway. Ni-containing acireductone dioxygenase (Ni-ARD) produces methylthiopropionate, carbon monoxide and formate, and does not lie on the methionine recycle pathway. This chain is Acireductone dioxygenase, found in Stenotrophomonas maltophilia (strain K279a).